The chain runs to 131 residues: Hydrophilin PGA14 (131 aa).

The signal sequence occupies residues 1 to 18 (MKFTTVATVFAISSLAAA). Composition is skewed to basic and acidic residues over residues 42-59 (YGRF…ETGT) and 79-96 (KESD…RDSK). The interval 42–110 (YGRFDKTSRS…NSTTSSGNNG (69 aa)) is disordered. 2 N-linked (GlcNAc...) asparagine glycosylation sites follow: Asn-97 and Asn-101. Low complexity predominate over residues 97-110 (NASSNSTTSSGNNG). Ser-105 carries GPI-anchor amidated serine lipidation. Residues 106 to 131 (SGNNGVATGVSLGLAGVLAVGAALVI) constitute a propeptide, removed in mature form.

Belongs to the PGA14 family. Post-translationally, the GPI-anchor is attached to the protein in the endoplasmic reticulum and serves to target the protein to the cell surface. There, the glucosamine-inositol phospholipid moiety is cleaved off and the GPI-modified mannoprotein is covalently attached via its lipidless GPI glycan remnant to the 1,6-beta-glucan of the outer cell wall layer.

The protein localises to the secreted. It localises to the cell wall. It is found in the membrane. In terms of biological role, hydrophilin which is essential to overcome the simple stress of the desiccation-rehydration process. The protein is Hydrophilin PGA14 (PGA14) of Candida albicans (strain SC5314 / ATCC MYA-2876) (Yeast).